Reading from the N-terminus, the 517-residue chain is Squalene epoxidase 6 (517 aa).

Helical transmembrane passes span 3 to 23 (FTHV…VFYL) and 45 to 65 (AADV…YALA). FAD contacts are provided by residues 55–56 (VG), 75–76 (ER), Arg83, Phe88, Arg156, Val172, Asp336, and Met349. The helical transmembrane segment at 447-467 (LVYHLCAITLSSIGQLLSPFP) threads the bilayer.

Belongs to the squalene monooxygenase family. FAD serves as cofactor. In terms of tissue distribution, expressed in seedlings, leaves, stems, inflorescences and siliques.

The protein resides in the membrane. It carries out the reaction squalene + reduced [NADPH--hemoprotein reductase] + O2 = (S)-2,3-epoxysqualene + oxidized [NADPH--hemoprotein reductase] + H2O + H(+). The protein operates within terpene metabolism; lanosterol biosynthesis; lanosterol from farnesyl diphosphate: step 2/3. Its function is as follows. Catalyzes the stereospecific oxidation of squalene to (S)-2,3-epoxysqualene, and is considered to be a rate-limiting enzyme in steroid biosynthesis. The sequence is that of Squalene epoxidase 6 (SQE6) from Arabidopsis thaliana (Mouse-ear cress).